The chain runs to 576 residues: RING finger and SPRY domain-containing protein 1 (576 aa).

The first 16 residues, 1 to 16 (MIVFGWAVFLASRSLG), serve as a signal peptide directing secretion. Ser50 carries the post-translational modification Phosphoserine. A disordered region spans residues 50–99 (SGTDDSVDTQQQQAENSAVPTADTRSQPRDPVRPPRRGRGPHEPRRKKQN). Over residues 57–68 (DTQQQQAENSAV) the composition is skewed to polar residues. The segment covering 83 to 97 (PPRRGRGPHEPRRKK) has biased composition (basic residues). Residues 300–483 (LFLKEGRQLT…CEFNFGAKPF (184 aa)) enclose the B30.2/SPRY domain. Asn314 carries N-linked (GlcNAc...) asparagine glycosylation. Residues 527-562 (CSLCCDEVADTQLKPCGHSDLCMDCALQLETCPLCR) form an RING-type zinc finger.

It is found in the secreted. This is RING finger and SPRY domain-containing protein 1 (RSPRY1) from Pongo abelii (Sumatran orangutan).